Reading from the N-terminus, the 102-residue chain is Small ribosomal subunit protein uS10 (102 aa).

The protein belongs to the universal ribosomal protein uS10 family. In terms of assembly, part of the 30S ribosomal subunit.

Functionally, involved in the binding of tRNA to the ribosomes. In Brevibacillus brevis (strain 47 / JCM 6285 / NBRC 100599), this protein is Small ribosomal subunit protein uS10.